We begin with the raw amino-acid sequence, 103 residues long: Defensin-like protein 289 (103 aa).

The first 29 residues, 1–29 (MATLKTTIFIIFILYISCTMFVNIFRVQA), serve as a signal peptide directing secretion. 6 disulfide bridges follow: Cys33-Cys50, Cys39-Cys55, Cys43-Cys57, Cys72-Cys92, Cys78-Cys98, and Cys84-Cys100.

The protein belongs to the DEFL family.

Its subcellular location is the secreted. The polypeptide is Defensin-like protein 289 (Arabidopsis thaliana (Mouse-ear cress)).